Consider the following 2058-residue polypeptide: Unconventional myosin-X (2058 aa).

An N-acetylmethionine modification is found at Met-1. The Myosin motor domain occupies Glu-63–Glu-739. ATP-binding positions include Asn-104, Tyr-113, Gly-160 to Glu-165, and Asn-215. The tract at residues Leu-619 to Met-641 is actin-binding. IQ domains lie at Val-742–Arg-763, Lys-764–His-787, and Leu-788–Glu-817. The interval Glu-814–Glu-883 is SAH. Disordered stretches follow at residues Glu-819–Glu-840 and Glu-847–Gln-866. Residues Glu-847–Glu-861 show a composition bias toward basic and acidic residues. Residues Asn-884–Ala-934 adopt a coiled-coil conformation. Residues Ser-962, Ser-965, and Ser-968 each carry the phosphoserine modification. The interval Gly-964 to Asp-1090 is disordered. Residues Pro-989–Ala-1003 show a composition bias toward acidic residues. A compositionally biased stretch (polar residues) spans Val-1040–Ser-1049. The span at Ser-1060 to Ser-1071 shows a compositional bias: low complexity. Thr-1158 carries the post-translational modification Phosphothreonine. PH domains are found at residues Glu-1212 to Ala-1310 and Glu-1392 to Asp-1497. In terms of domain architecture, MyTH4 spans Leu-1547–Ile-1695. Residues Met-1700–Arg-2044 enclose the FERM domain.

The protein belongs to the TRAFAC class myosin-kinesin ATPase superfamily. Myosin family. Monomer, when in an inactive conformation in the cytosol. Homodimer in its active, membrane-bound conformation; antiparallel coiled coil-mediated dimer formation. Interacts strongly with CALM3 and weakly with CALM, the CALM3 interaction is essential for function in filopodial extension and motility. Interacts with ECPAS. Interacts with NEO1. Interacts with ITGB1 and ITGB3. Interacts with VASP. Interacts with DCC and ITGB5; the presence of DCC inhibits ITGB5 binding. Interacts with tubulin; ITGB5 or DCC binding inhibits tubulin binding. The initiator methionine for isoform Headless is removed. In terms of tissue distribution, ubiquitous.

It is found in the cytoplasm. It localises to the cytosol. The protein localises to the cell projection. Its subcellular location is the lamellipodium. The protein resides in the ruffle. It is found in the cytoskeleton. It localises to the filopodium tip. The protein localises to the cell cortex. Its subcellular location is the filopodium membrane. Functionally, myosins are actin-based motor molecules with ATPase activity. Unconventional myosins serve in intracellular movements. MYO10 binds to actin filaments and actin bundles and functions as a plus end-directed motor. Moves with higher velocity and takes larger steps on actin bundles than on single actin filaments. The tail domain binds to membranous compartments containing phosphatidylinositol 3,4,5-trisphosphate or integrins, and mediates cargo transport along actin filaments. Regulates cell shape, cell spreading and cell adhesion. Stimulates the formation and elongation of filopodia. In hippocampal neurons it induces the formation of dendritic filopodia by trafficking the actin-remodeling protein VASP to the tips of filopodia, where it promotes actin elongation. Plays a role in formation of the podosome belt in osteoclasts. In terms of biological role, functions as a dominant-negative regulator of isoform 1, suppressing its filopodia-inducing and axon outgrowth-promoting activities. In hippocampal neurons, it increases VASP retention in spine heads to induce spine formation and spine head expansion. The protein is Unconventional myosin-X (MYO10) of Homo sapiens (Human).